Consider the following 395-residue polypeptide: Ribosomal RNA large subunit methyltransferase I (395 aa).

One can recognise a PUA domain in the interval 2 to 79; the sequence is SSRVTLHPGR…QNESVDNGFF (78 aa).

It belongs to the methyltransferase superfamily. RlmI family.

Its subcellular location is the cytoplasm. It catalyses the reaction cytidine(1962) in 23S rRNA + S-adenosyl-L-methionine = 5-methylcytidine(1962) in 23S rRNA + S-adenosyl-L-homocysteine + H(+). Specifically methylates the cytosine at position 1962 (m5C1962) of 23S rRNA. This Pseudoalteromonas atlantica (strain T6c / ATCC BAA-1087) protein is Ribosomal RNA large subunit methyltransferase I.